A 555-amino-acid polypeptide reads, in one-letter code: Protein FAM234A (555 aa).

Positions methionine 1 to glutamine 22 are enriched in basic and acidic residues. The interval methionine 1 to valine 40 is disordered. The Cytoplasmic segment spans residues methionine 1–threonine 49. Position 21 is a phosphoserine (serine 21). The chain crosses the membrane as a helical; Signal-anchor for type II membrane protein span at residues valine 50–isoleucine 70. Over proline 71 to methionine 555 the chain is Extracellular. Residues asparagine 116, asparagine 120, asparagine 317, asparagine 392, and asparagine 476 are each glycosylated (N-linked (GlcNAc...) asparagine).

Belongs to the FAM234 family.

It is found in the membrane. This is Protein FAM234A from Mus musculus (Mouse).